A 147-amino-acid chain; its full sequence is Sentan (147 aa).

The disordered stretch occupies residues 1 to 32; the sequence is MGGCMHSTQDKSLHLEGDPNPSAAPTSTCAPR. A compositionally biased stretch (basic and acidic residues) spans 8-17; it reads TQDKSLHLEG.

It belongs to the S-100 family.

It is found in the cell projection. It localises to the cilium. In terms of biological role, may be a component of the linker structure that bridges the ciliary membrane and peripheral singlet microtubules. This Homo sapiens (Human) protein is Sentan (SNTN).